A 200-amino-acid polypeptide reads, in one-letter code: GTP-binding protein rho5 (200 aa).

13–20 lines the GTP pocket; that stretch reads GDGACGKT. The Effector region signature appears at 35–43; the sequence is YVPTVFENY. Residues 60 to 64 and 118 to 121 each bind GTP; these read DTAGQ and CKVD. C197 carries the post-translational modification Cysteine methyl ester. A lipid anchor (S-geranylgeranyl cysteine) is attached at C197. The propeptide at 198 to 200 is removed in mature form; the sequence is ILL.

Belongs to the small GTPase superfamily. Rho family.

The protein localises to the cell membrane. The protein is GTP-binding protein rho5 (rho5) of Schizosaccharomyces pombe (strain 972 / ATCC 24843) (Fission yeast).